The primary structure comprises 460 residues: Argininosuccinate lyase (460 aa).

The protein belongs to the lyase 1 family. Argininosuccinate lyase subfamily.

It localises to the cytoplasm. The enzyme catalyses 2-(N(omega)-L-arginino)succinate = fumarate + L-arginine. Its pathway is amino-acid biosynthesis; L-arginine biosynthesis; L-arginine from L-ornithine and carbamoyl phosphate: step 3/3. This Streptococcus sanguinis (strain SK36) protein is Argininosuccinate lyase.